Here is a 169-residue protein sequence, read N- to C-terminus: Transcription antitermination protein NusB (169 aa).

The interval 1 to 23 (MADSKKPAIKKPVPKGDRKANRR) is disordered.

It belongs to the NusB family.

Its function is as follows. Involved in transcription antitermination. Required for transcription of ribosomal RNA (rRNA) genes. Binds specifically to the boxA antiterminator sequence of the ribosomal RNA (rrn) operons. The chain is Transcription antitermination protein NusB from Rhodopseudomonas palustris (strain HaA2).